A 103-amino-acid chain; its full sequence is MSTTRAIPVSLKDRSDIDFSTSLGGTLYGTTPGGTKIVYDRNALLQYRNSPLSKTPPPQLAHITNTELNKKVEKSTTTPTTTTPPTTTAKPKPTNDDDIFPME.

A disordered region spans residues 49-103 (NSPLSKTPPPQLAHITNTELNKKVEKSTTTPTTTTPPTTTAKPKPTNDDDIFPME). A compositionally biased stretch (low complexity) spans 76-92 (TTTPTTTTPPTTTAKPK).

It belongs to the eIF4E-binding protein family.

Regulates assembly of the eIF4F complex. This chain is Eukaryotic translation initiation factor 4E-1A-binding protein homolog (febA), found in Dictyostelium discoideum (Social amoeba).